Consider the following 97-residue polypeptide: Cytochrome c2 iso-2 (97 aa).

Residues Cys-10, Cys-13, His-14, and Met-75 each contribute to the heme c site.

Belongs to the cytochrome c family. Binds 1 heme c group covalently per subunit.

Its function is as follows. Cytochrome c2 is found mainly in purple, non-sulfur, photosynthetic bacteria where it functions as the electron donor to the oxidized bacteriochlorophyll in the photophosphorylation pathway. However, it may also have a role in the respiratory chain and is found in some non-photosynthetic bacteria. This is Cytochrome c2 iso-2 from Magnetospirillum molischianum (Rhodospirillum molischianum).